We begin with the raw amino-acid sequence, 412 residues long: MGLLRTIALVILGFSAFIFTVLFGRLPVFRKTPIGLLHRIIWLHIPHGISYIDARLFNGRILRSWGQAGNYILYENHPLVLIFFTTILVIGELIFIPSAWPRISVMHQLYIPIIIALPYYFLYVSVVTKSYITPDNHAEEMKRYPYDKVIFHPGHSCETCHFLKPARSKHCSYCKRCVSRQDHHCIWLTNCVGLNNYHYFLYLLLSLSVMLTYGSWLGYSLLSQTLDRLIPPSSPVRLRKQSWPTFLNMWAAVVAYDTRIGGVTMLMFMTAPLAFAFLVYHVYLIWAGMTTNESAKWSDWKDDITDGMAFKFIGDHKRSDSPLLESAETADSWPGYSDQILVLTEGDPPKEGHQVHKSSNDVIQPTNPDAPIDRRFARVRSMKEIDNIYDLGFWNNLCHVFGNYAAGKAHRA.

Over 1–2 (MG) the chain is Lumenal. A helical transmembrane segment spans residues 3–23 (LLRTIALVILGFSAFIFTVLF). Topologically, residues 24–78 (GRLPVFRKTPIGLLHRIIWLHIPHGISYIDARLFNGRILRSWGQAGNYILYENHP) are cytoplasmic. A helical transmembrane segment spans residues 79–99 (LVLIFFTTILVIGELIFIPSA). Residues 100 to 107 (WPRISVMH) lie on the Lumenal side of the membrane. Residues 108 to 128 (QLYIPIIIALPYYFLYVSVVT) traverse the membrane as a helical segment. The Cytoplasmic portion of the chain corresponds to 129–198 (KSYITPDNHA…TNCVGLNNYH (70 aa)). The 51-residue stretch at 155 to 205 (HSCETCHFLKPARSKHCSYCKRCVSRQDHHCIWLTNCVGLNNYHYFLYLLL) folds into the DHHC domain. A helical transmembrane segment spans residues 199 to 219 (YFLYLLLSLSVMLTYGSWLGY). Residues 220–265 (SLLSQTLDRLIPPSSPVRLRKQSWPTFLNMWAAVVAYDTRIGGVTM) are Lumenal-facing. Residues 266–286 (LMFMTAPLAFAFLVYHVYLIW) traverse the membrane as a helical segment. Residues 287–412 (AGMTTNESAK…NYAAGKAHRA (126 aa)) are Cytoplasmic-facing.

This sequence belongs to the DHHC palmitoyltransferase family. SWF1 subfamily.

The protein resides in the endoplasmic reticulum membrane. It carries out the reaction L-cysteinyl-[protein] + hexadecanoyl-CoA = S-hexadecanoyl-L-cysteinyl-[protein] + CoA. In terms of biological role, palmitoyltransferase that targets several endosomal SNAREs. Palmitoylates the SNAREs at cysteine residues close to the cytoplasmic end of their transmembrane domain. May have a role in the cellular quality control of transmembrane domain-containing proteins. The sequence is that of Palmitoyltransferase swf1 (swf1) from Emericella nidulans (strain FGSC A4 / ATCC 38163 / CBS 112.46 / NRRL 194 / M139) (Aspergillus nidulans).